A 211-amino-acid polypeptide reads, in one-letter code: Intermembrane phospholipid transport system binding protein MlaC (211 aa).

Residues 1–21 (MFKRLMMVALLVIAPLSAATA) form the signal peptide.

The protein belongs to the MlaC/ttg2D family. Interacts with the MlaA-OmpF outer membrane complex and with the inner membrane ABC transporter complex MlaFEDB, via direct interaction with MlaD.

It localises to the periplasm. Its function is as follows. Involved in a phospholipid transport pathway that maintains lipid asymmetry in the outer membrane by retrograde trafficking of phospholipids from the outer membrane to the inner membrane. May transfer phospholipid across the periplasmic space and deliver it to the MlaFEDB complex at the inner membrane. This Escherichia coli (strain K12) protein is Intermembrane phospholipid transport system binding protein MlaC.